Here is a 61-residue protein sequence, read N- to C-terminus: Small ribosomal subunit protein uS14 (61 aa).

Zn(2+) is bound by residues Cys24, Cys27, Cys40, and Cys43.

It belongs to the universal ribosomal protein uS14 family. Zinc-binding uS14 subfamily. As to quaternary structure, part of the 30S ribosomal subunit. Contacts proteins S3 and S10. Zn(2+) is required as a cofactor.

In terms of biological role, binds 16S rRNA, required for the assembly of 30S particles and may also be responsible for determining the conformation of the 16S rRNA at the A site. This is Small ribosomal subunit protein uS14 from Streptococcus mutans serotype c (strain ATCC 700610 / UA159).